The following is a 154-amino-acid chain: Cytochrome c-type biogenesis protein CcmE (154 aa).

The Cytoplasmic segment spans residues 1 to 8; it reads MHPQRKQR. Residues 9 to 29 form a helical; Signal-anchor for type II membrane protein membrane-spanning segment; it reads LMIVLFIVVFSSLAVGLIAYA. At 30–154 the chain is on the periplasmic side; it reads LRENINLFYP…ATCGGLNYGA (125 aa). Heme contacts are provided by histidine 124 and tyrosine 128.

This sequence belongs to the CcmE/CycJ family.

The protein resides in the cell inner membrane. Its function is as follows. Heme chaperone required for the biogenesis of c-type cytochromes. Transiently binds heme delivered by CcmC and transfers the heme to apo-cytochromes in a process facilitated by CcmF and CcmH. The protein is Cytochrome c-type biogenesis protein CcmE of Cellvibrio japonicus (strain Ueda107) (Pseudomonas fluorescens subsp. cellulosa).